Reading from the N-terminus, the 211-residue chain is Large ribosomal subunit protein uL4 (211 aa).

The interval 52 to 79 is disordered; the sequence is GRAEVHGSNSKPYSQKGTGRARRGDKKS. A compositionally biased stretch (polar residues) spans 58 to 68; sequence GSNSKPYSQKG.

Belongs to the universal ribosomal protein uL4 family. Part of the 50S ribosomal subunit.

In terms of biological role, one of the primary rRNA binding proteins, this protein initially binds near the 5'-end of the 23S rRNA. It is important during the early stages of 50S assembly. It makes multiple contacts with different domains of the 23S rRNA in the assembled 50S subunit and ribosome. Functionally, forms part of the polypeptide exit tunnel. In Treponema denticola (strain ATCC 35405 / DSM 14222 / CIP 103919 / JCM 8153 / KCTC 15104), this protein is Large ribosomal subunit protein uL4.